Here is a 211-residue protein sequence, read N- to C-terminus: Cytochrome c biogenesis ATP-binding export protein CcmA (211 aa).

Residues 8-210 (LEAKNLQCER…EVRRIQLGAV (203 aa)) form the ABC transporter domain. Residue 40-47 (GPNGAGKT) coordinates ATP.

This sequence belongs to the ABC transporter superfamily. CcmA exporter (TC 3.A.1.107) family. The complex is composed of two ATP-binding proteins (CcmA) and two transmembrane proteins (CcmB).

Its subcellular location is the cell inner membrane. It catalyses the reaction heme b(in) + ATP + H2O = heme b(out) + ADP + phosphate + H(+). Functionally, part of the ABC transporter complex CcmAB involved in the biogenesis of c-type cytochromes; once thought to export heme, this seems not to be the case, but its exact role is uncertain. Responsible for energy coupling to the transport system. The polypeptide is Cytochrome c biogenesis ATP-binding export protein CcmA (Hahella chejuensis (strain KCTC 2396)).